The following is a 100-amino-acid chain: Urease subunit gamma (100 aa).

The protein belongs to the urease gamma subunit family. In terms of assembly, heterotrimer of UreA (gamma), UreB (beta) and UreC (alpha) subunits. Three heterotrimers associate to form the active enzyme.

The protein localises to the cytoplasm. It carries out the reaction urea + 2 H2O + H(+) = hydrogencarbonate + 2 NH4(+). Its pathway is nitrogen metabolism; urea degradation; CO(2) and NH(3) from urea (urease route): step 1/1. The sequence is that of Urease subunit gamma from Rhodopseudomonas palustris (strain BisB5).